Here is a 975-residue protein sequence, read N- to C-terminus: MSGIGSKRAAGEPGTSVPPEKKTAVEDSGTTVETIKLGGVSSTEELDIRTLQTKNRKLAEMLDQRQAIEDELREHIEKLERRQATDDASLLIVNRYWSQFDENIRIILKRYDLEQGLGDLLTERKALVVPEPEPDSDSNQERKDDRERGEGQEPAFSFLATLASSSSEEMESQLQERVESSRRAVSQIVTVYDKLQEKVELLSRKLNSGDSLMVEEAVQELNSFLAQENTRLQELTDLLQEKHCTMSQEFSKLQSKVETAESRVSVLESMIDDLQWDIDKIRKREQRLNRHLAEVLERVNSKGYKVYGAGSSLYGGTITINARKFEEMNAELEENKELAQNRHCELEKLRQDFEEVTSQNEKLKVELRSAVEEVVKETPEYRCMQSQFSVLYNESLQLKAHLDEARTLLHGTRGTHQRQVELIERDEVSLHKKLRTEVIQLEDTLAQVRKEYEMLRIEFEQTLAANEQAGPINREMRHLISSLQNHNHQLKGEVLRYKRKLREAQSDLNKTRLRSGSALLQSQSSTEDPKDEPAELKQDSEDLATQSAASKASQEEVNEIKSKRDEEERERERREKEREREREREKEKEREREKQKLKESEKERESAKDKEKGKHDDGRKKEAEIIKQLKIELKKAQESQKEMKLLLDMYRSAPKEQRDKVQLMAAEKKSKAELEDLRQRLKDLEDKEKKENKKMADEDALRKIRAVEEQIEYLQKKLAMAKQEEEALLSEMDVTGQAFEDMQEQNIRLMQQLREKDDANFKLMSERIKSNQIHKLLKEEKEELADQVLTLKTQVDAQLQVVRKLEEKEHLLQSNIGTGEKELGLRTQALEMNKRKAMEAAQLADDLKAQLEMAQKKLHDFQDEIVENSVTKEKDMFNFKRAQEDISRLRRKLETTKKPDNVPKCDEILMEEIKDYKARLTCPCCNMRKKDAVLTKCFHVFCFECVKTRYDTRQRKCPKCNAAFGANDFHRIYIG.

The tract at residues Met-1 to Leu-37 is disordered. Lys-21 bears the N6-acetyllysine mark. Position 41 is a phosphoserine (Ser-41). Positions Thr-43 to Leu-90 form a coiled coil. Positions Lys-125–Ala-155 are disordered. 2 positions are modified to phosphoserine: Ser-136 and Ser-138. The span at Asn-139–Gly-151 shows a compositional bias: basic and acidic residues. Coiled coils occupy residues Glu-168–Val-375 and Ser-429–Lys-898. N6-acetyllysine occurs at positions 348 and 510. The tract at residues Asp-507–Glu-622 is disordered. At Ser-522 the chain carries Phosphoserine. Basic and acidic residues predominate over residues Glu-527–Ser-540. A compositionally biased stretch (polar residues) spans Leu-543–Ala-552. Over residues Asn-558 to Glu-622 the composition is skewed to basic and acidic residues. Ser-562 carries the post-translational modification Phosphoserine. Residues Cys-922–Asn-961 form an RING-type zinc finger.

Belongs to the BRE1 family. As to quaternary structure, component of the RNF20/40 complex (also known as BRE1 complex) probably composed of 2 copies of RNF20/BRE1A and 2 copies of RNF40/BRE1B. Interacts with UBE2E1/UBCH6. Interacts with p53/TP53 and WAC. Interacts with PAF1; the interaction mediates the association of the PAF1 and RNF20/40 complexes which is a prerequsite for recruitment of UBE2A/B. Interacts with PA2G4. Interacts with FBXL19.

The protein localises to the nucleus. The enzyme catalyses S-ubiquitinyl-[E2 ubiquitin-conjugating enzyme]-L-cysteine + [acceptor protein]-L-lysine = [E2 ubiquitin-conjugating enzyme]-L-cysteine + N(6)-ubiquitinyl-[acceptor protein]-L-lysine.. It participates in protein modification; protein ubiquitination. In terms of biological role, component of the RNF20/40 E3 ubiquitin-protein ligase complex that mediates monoubiquitination of 'Lys-120' of histone H2B (H2BK120ub1). H2BK120ub1 gives a specific tag for epigenetic transcriptional activation and is also prerequisite for histone H3 'Lys-4' and 'Lys-79' methylation (H3K4me and H3K79me, respectively). It thereby plays a central role in histone code and gene regulation. The RNF20/40 complex forms a H2B ubiquitin ligase complex in cooperation with the E2 enzyme UBE2A or UBE2B; reports about the cooperation with UBE2E1/UBCH are contradictory. Required for transcriptional activation of Hox genes. Recruited to the MDM2 promoter, probably by being recruited by p53/TP53, and thereby acts as a transcriptional coactivator. Mediates the polyubiquitination of PA2G4 leading to its proteasome-mediated degradation. In Bos taurus (Bovine), this protein is E3 ubiquitin-protein ligase BRE1A (RNF20).